The sequence spans 433 residues: Divalent metal cation transporter MntH (433 aa).

A run of 11 helical transmembrane segments spans residues 32 to 52 (LIFA…GNFA), 62 to 82 (GYDL…FQGL), 101 to 121 (TLPP…AMAT), 131 to 151 (IGIA…TGIV), 168 to 188 (LVIG…LLIV), 209 to 229 (ALTI…LFLH), 256 to 276 (VLAA…MAAG), 296 to 316 (SPLL…ASGV), 345 to 365 (ALTM…TRAL), 366 to 386 (VLSQ…LLWF), and 401 to 421 (ITAI…VILL).

Belongs to the NRAMP family.

It is found in the cell inner membrane. In terms of biological role, h(+)-stimulated, divalent metal cation uptake system. The protein is Divalent metal cation transporter MntH of Acidiphilium cryptum (strain JF-5).